A 422-amino-acid polypeptide reads, in one-letter code: Cotranscriptional regulator ARB2A homolog (422 aa).

Positions 1-19 are cleaved as a signal peptide; the sequence is MKLEIKCFIICKVLPLVWL. The disordered stretch occupies residues 213–253; the sequence is KSKVPADQPSPDSSDEPAEKRERRERNPKETKKRRDFYEKY. Over residues 229–242 the composition is skewed to basic and acidic residues; it reads PAEKRERRERNPKE. Ser-299 acts as the Nucleophile in catalysis. The tract at residues 403 to 422 is disordered; the sequence is NTKTKPTPTRRSNRIKHEDL.

The protein belongs to the ARB2A family.

The protein localises to the nucleus. The protein resides in the cytoplasm. Its function is as follows. May play role in the regulation of alternative splicing. May have hydrolase activity. The polypeptide is Cotranscriptional regulator ARB2A homolog (arb2a) (Xenopus tropicalis (Western clawed frog)).